The sequence spans 105 residues: MKMVRAILRPEWTEEVTDGLAEAGYYSLTKINVFGRGKQKGITVGDVHYDELAKTMIMMAVEDEAVDKVIKIISGKAYTGNMGDGKIFVNTIEAAYTISSGEKGL.

It belongs to the P(II) protein family.

Its function is as follows. Could be involved in the regulation of nitrogen fixation. The chain is Nitrogen fixation nifHD2 region GlnB-like protein 1 from Methanosarcina barkeri.